We begin with the raw amino-acid sequence, 886 residues long: Leucine--tRNA ligase (886 aa).

The 'HIGH' region signature appears at 46-56 (PYPSGKLHMGH). The short motif at 638–642 (TMSKS) is the 'KMSKS' region element. Residue Lys-641 coordinates ATP.

It belongs to the class-I aminoacyl-tRNA synthetase family.

Its subcellular location is the cytoplasm. It carries out the reaction tRNA(Leu) + L-leucine + ATP = L-leucyl-tRNA(Leu) + AMP + diphosphate. This chain is Leucine--tRNA ligase, found in Polaromonas sp. (strain JS666 / ATCC BAA-500).